Consider the following 423-residue polypeptide: 3-phosphoshikimate 1-carboxyvinyltransferase (423 aa).

K21, S22, and R26 together coordinate 3-phosphoshikimate. Phosphoenolpyruvate is bound at residue K21. Phosphoenolpyruvate is bound by residues G92 and R120. 3-phosphoshikimate contacts are provided by S164, Q166, D312, and K339. Residue Q166 participates in phosphoenolpyruvate binding. The active-site Proton acceptor is the D312. 2 residues coordinate phosphoenolpyruvate: R343 and R385.

It belongs to the EPSP synthase family. In terms of assembly, monomer.

Its subcellular location is the cytoplasm. It carries out the reaction 3-phosphoshikimate + phosphoenolpyruvate = 5-O-(1-carboxyvinyl)-3-phosphoshikimate + phosphate. Its pathway is metabolic intermediate biosynthesis; chorismate biosynthesis; chorismate from D-erythrose 4-phosphate and phosphoenolpyruvate: step 6/7. Its function is as follows. Catalyzes the transfer of the enolpyruvyl moiety of phosphoenolpyruvate (PEP) to the 5-hydroxyl of shikimate-3-phosphate (S3P) to produce enolpyruvyl shikimate-3-phosphate and inorganic phosphate. The polypeptide is 3-phosphoshikimate 1-carboxyvinyltransferase (Thermoanaerobacter pseudethanolicus (strain ATCC 33223 / 39E) (Clostridium thermohydrosulfuricum)).